The sequence spans 241 residues: Proteasome subunit alpha type-5 (241 aa).

Belongs to the peptidase T1A family. The 26S proteasome consists of a 20S proteasome core and two 19S regulatory subunits. The 20S proteasome core is composed of 28 subunits that are arranged in four stacked rings, resulting in a barrel-shaped structure. The two end rings are each formed by seven alpha subunits, and the two central rings are each formed by seven beta subunits. The catalytic chamber with the active sites is on the inside of the barrel.

It is found in the cytoplasm. The protein localises to the nucleus. The proteasome is a multicatalytic proteinase complex which is characterized by its ability to cleave peptides with Arg, Phe, Tyr, Leu, and Glu adjacent to the leaving group at neutral or slightly basic pH. The proteasome has an ATP-dependent proteolytic activity. This Dictyostelium discoideum (Social amoeba) protein is Proteasome subunit alpha type-5 (psmA5).